A 296-amino-acid chain; its full sequence is Ribonuclease HIII (296 aa).

Residues 80 to 296 (LALIGSDEVG…NTKKAYQRLK (217 aa)) enclose the RNase H type-2 domain. The a divalent metal cation site is built by Asp-86, Glu-87, and Asp-191.

This sequence belongs to the RNase HII family. RnhC subfamily. Mn(2+) serves as cofactor. The cofactor is Mg(2+).

The protein localises to the cytoplasm. The catalysed reaction is Endonucleolytic cleavage to 5'-phosphomonoester.. Functionally, endonuclease that specifically degrades the RNA of RNA-DNA hybrids. The protein is Ribonuclease HIII of Streptococcus thermophilus (strain ATCC BAA-491 / LMD-9).